Reading from the N-terminus, the 27-residue chain is Nucleoside diphosphate kinase 2 (27 aa).

ATP is bound at residue Lys3.

It belongs to the NDK family. The cofactor is Mg(2+).

The catalysed reaction is a 2'-deoxyribonucleoside 5'-diphosphate + ATP = a 2'-deoxyribonucleoside 5'-triphosphate + ADP. It catalyses the reaction a ribonucleoside 5'-diphosphate + ATP = a ribonucleoside 5'-triphosphate + ADP. Its function is as follows. Major role in the synthesis of nucleoside triphosphates other than ATP. The ATP gamma phosphate is transferred to the NDP beta phosphate via a ping-pong mechanism, using a phosphorylated active-site intermediate. The sequence is that of Nucleoside diphosphate kinase 2 from Pseudotsuga menziesii (Douglas-fir).